The primary structure comprises 1807 residues: Nucleoporin nup189 (1807 aa).

The tract at residues 1-118 (MFGQNNSSGF…SGGGLFGSNT (118 aa)) is disordered. 2 GLFG repeats span residues 26–29 (GLFG) and 66–69 (GLFG). Polar residues predominate over residues 29-61 (GSNSNTPGNTLFGSQNTSTTGFGQNTTQPLFGS). The segment covering 62 to 77 (NTNGGLFGNRNNTTTT) has biased composition (low complexity). Gly residues predominate over residues 78-90 (GGTGFGMSSGTGM). A compositionally biased stretch (polar residues) spans 93 to 108 (QSNTPAFGGTNNATNP). GLFG repeat units follow at residues 112–115 (GLFG), 152–155 (GLFG), 177–180 (GLFG), 308–311 (GLFG), 335–338 (GLFG), 350–353 (GLFG), 381–384 (GLFG), 399–402 (GLFG), 435–438 (GLFG), and 521–524 (GLFG). A compositionally biased stretch (polar residues) spans 565 to 584 (PGTGLFGSTQTNNATSNTGT). Positions 565–685 (PGTGLFGSTQ…SSTTSQVAPT (121 aa)) are disordered. GLFG repeat units follow at residues 585–588 (GLFG), 611–614 (GLFG), 627–630 (GLFG), and 646–649 (GLFG). Residues 588 to 600 (GSNNANTTNTGGS) show a composition bias toward low complexity. Polar residues predominate over residues 603-644 (NKPSTTTGGLFGNTTAQQPSTTTSGLFGASNTNNQAQTSNFG). The segment covering 653–663 (AGQQQQPLQAS) has biased composition (low complexity). The span at 664–685 (IDQNPYGNNPLFSSTTSQVAPT) shows a compositional bias: polar residues. Position 724 is a phosphoserine (S724). The segment at 785–814 (QNGVKNGNDAKSDSKVQEKAPQNEADGSLK) is disordered. Positions 792–802 (NDAKSDSKVQE) are enriched in basic and acidic residues. One can recognise a Peptidase S59 domain in the interval 822–963 (SDDYWMKPSI…GKWIFKVQHF (142 aa)). The interval 974–1020 (EENDMSSTSNEAGNLKKYDQPNLKVSGKNDSFVTHHTPGAFPNDSKN) is disordered. Residue S1051 is modified to Phosphoserine. A disordered region spans residues 1082 to 1104 (KENNVPLSEDDLSNSSESSNESV). The segment covering 1094-1104 (SNSSESSNESV) has biased composition (low complexity).

This sequence belongs to the nucleoporin GLFG family. In terms of assembly, interacts (via G-L-F-G repeats) with rpn15/dss1. Interacts with raf1. Interacts with ned1. Nup189 is autocatalytically cleaved in nup98 and nup96.

The protein resides in the nucleus. It is found in the nuclear pore complex. In terms of biological role, functions as a component of the nuclear pore complex (NPC). NPC components, collectively referred to as nucleoporins (NUPs), can play the role of both NPC structural components and of docking or interaction partners for transiently associated nuclear transport factors. Active directional transport is assured by both, a Phe-Gly (FG) repeat affinity gradient for these transport factors across the NPC and a transport cofactor concentration gradient across the nuclear envelope. Nup189 is autocatalytically cleaved in vivo in 2 polypeptides which assume different functions in the NPC. Nup98 as one of the FG repeat nucleoporins participates in karyopherin interactions and contains part of the autocatalytic cleavage activity. Nup96 as part of the NUP84 complex is involved in nuclear poly(A)+ RNA and tRNA export. The protein is Nucleoporin nup189 (nup189) of Schizosaccharomyces pombe (strain 972 / ATCC 24843) (Fission yeast).